Here is a 412-residue protein sequence, read N- to C-terminus: 4-hydroxyphenylpyruvate dioxygenase (412 aa).

VOC domains lie at 31-179 (GYDH…LISR) and 209-369 (RIDH…LFTK). His212, His295, and Glu380 together coordinate Fe cation.

It belongs to the 4HPPD family. Fe cation is required as a cofactor.

The enzyme catalyses 3-(4-hydroxyphenyl)pyruvate + O2 = homogentisate + CO2. Its pathway is amino-acid degradation; L-phenylalanine degradation; acetoacetate and fumarate from L-phenylalanine: step 3/6. The protein is 4-hydroxyphenylpyruvate dioxygenase of Neurospora crassa (strain ATCC 24698 / 74-OR23-1A / CBS 708.71 / DSM 1257 / FGSC 987).